A 622-amino-acid chain; its full sequence is Chaperone protein HscA homolog (622 aa).

Belongs to the heat shock protein 70 family.

Functionally, chaperone involved in the maturation of iron-sulfur cluster-containing proteins. Has a low intrinsic ATPase activity which is markedly stimulated by HscB. The sequence is that of Chaperone protein HscA homolog from Burkholderia thailandensis (strain ATCC 700388 / DSM 13276 / CCUG 48851 / CIP 106301 / E264).